Reading from the N-terminus, the 142-residue chain is Large ribosomal subunit protein uL11 (142 aa).

This sequence belongs to the universal ribosomal protein uL11 family. In terms of assembly, part of the ribosomal stalk of the 50S ribosomal subunit. Interacts with L10 and the large rRNA to form the base of the stalk. L10 forms an elongated spine to which L12 dimers bind in a sequential fashion forming a multimeric L10(L12)X complex. One or more lysine residues are methylated.

In terms of biological role, forms part of the ribosomal stalk which helps the ribosome interact with GTP-bound translation factors. The protein is Large ribosomal subunit protein uL11 of Proteus mirabilis (strain HI4320).